A 282-amino-acid polypeptide reads, in one-letter code: Probable endonuclease 4 (282 aa).

Residues H69, H109, E145, D179, H182, H216, D229, H231, and E261 each contribute to the Zn(2+) site.

It belongs to the AP endonuclease 2 family. Requires Zn(2+) as cofactor.

It catalyses the reaction Endonucleolytic cleavage to 5'-phosphooligonucleotide end-products.. Its function is as follows. Endonuclease IV plays a role in DNA repair. It cleaves phosphodiester bonds at apurinic or apyrimidinic (AP) sites, generating a 3'-hydroxyl group and a 5'-terminal sugar phosphate. This is Probable endonuclease 4 from Edwardsiella ictaluri (strain 93-146).